Consider the following 430-residue polypeptide: GTPase Obg (430 aa).

In terms of domain architecture, Obg spans methionine 1–leucine 158. The disordered stretch occupies residues arginine 118–proline 145. The region spanning alanine 159 to aspartate 329 is the OBG-type G domain. Residues glycine 165–serine 172, phenylalanine 190–lysine 194, aspartate 212–glycine 215, asparagine 282–aspartate 285, and serine 310–isoleucine 312 each bind GTP. Serine 172 and threonine 192 together coordinate Mg(2+). The region spanning lysine 352–glutamate 430 is the OCT domain.

This sequence belongs to the TRAFAC class OBG-HflX-like GTPase superfamily. OBG GTPase family. Monomer. It depends on Mg(2+) as a cofactor.

It localises to the cytoplasm. Its function is as follows. An essential GTPase which binds GTP, GDP and possibly (p)ppGpp with moderate affinity, with high nucleotide exchange rates and a fairly low GTP hydrolysis rate. Plays a role in control of the cell cycle, stress response, ribosome biogenesis and in those bacteria that undergo differentiation, in morphogenesis control. The sequence is that of GTPase Obg from Staphylococcus haemolyticus (strain JCSC1435).